The primary structure comprises 964 residues: Translation initiation factor IF-2 (964 aa).

The span at 105–119 shows a compositional bias: low complexity; it reads AALAESEASEAAPVV. Disordered regions lie at residues 105–133 and 146–378; these read AALA…EHRR and KARQ…PTEP. Composition is skewed to basic and acidic residues over residues 123–133, 146–183, 197–253, and 266–278; these read EVARREEEHRR, KARQ…KAEE, EAPR…RAIR, and PAER…KKAE. The span at 288 to 302 shows a compositional bias: low complexity; that stretch reads KPAGEARPAAAKKPA. The segment covering 303–313 has biased composition (pro residues); the sequence is APAPAAAPAPG. The tr-type G domain occupies 464-633; the sequence is TRPPVVTVMG…LLQAEVLELK (170 aa). The interval 473 to 480 is G1; that stretch reads GHVDHGKT. Residue 473-480 participates in GTP binding; that stretch reads GHVDHGKT. The G2 stretch occupies residues 498-502; the sequence is GITQH. Residues 519–522 are G3; it reads DTPG. Residues 519–523 and 573–576 contribute to the GTP site; these read DTPGH and TKVD. The G4 stretch occupies residues 573–576; the sequence is TKVD. A G5 region spans residues 609–611; it reads SAK.

This sequence belongs to the TRAFAC class translation factor GTPase superfamily. Classic translation factor GTPase family. IF-2 subfamily.

The protein localises to the cytoplasm. Functionally, one of the essential components for the initiation of protein synthesis. Protects formylmethionyl-tRNA from spontaneous hydrolysis and promotes its binding to the 30S ribosomal subunits. Also involved in the hydrolysis of GTP during the formation of the 70S ribosomal complex. In Ralstonia pickettii (strain 12J), this protein is Translation initiation factor IF-2.